The sequence spans 219 residues: Orotidine 5'-phosphate decarboxylase (219 aa).

Substrate is bound by residues Asp-10, Lys-32, 58 to 67, Ser-113, 163 to 173, Gly-186, and Arg-187; these read DFKVADIPYT and PGIGAQGGDPY. Lys-60 functions as the Proton donor in the catalytic mechanism.

The protein belongs to the OMP decarboxylase family. Type 1 subfamily. As to quaternary structure, homodimer.

It carries out the reaction orotidine 5'-phosphate + H(+) = UMP + CO2. Its pathway is pyrimidine metabolism; UMP biosynthesis via de novo pathway; UMP from orotate: step 2/2. Functionally, catalyzes the decarboxylation of orotidine 5'-monophosphate (OMP) to uridine 5'-monophosphate (UMP). This Thermoplasma volcanium (strain ATCC 51530 / DSM 4299 / JCM 9571 / NBRC 15438 / GSS1) protein is Orotidine 5'-phosphate decarboxylase.